Here is a 264-residue protein sequence, read N- to C-terminus: Synaptophysin-like protein 2 (264 aa).

The Cytoplasmic portion of the chain corresponds to 1 to 33 (MSSTESPGRTSDKSPRQQVDRLLLGLRWQRLEE). In terms of domain architecture, MARVEL spans 30–238 (RLEEPLGFIK…NCWFVFKETP (209 aa)). A helical membrane pass occupies residues 34-54 (PLGFIKVLQWLFAIFAFGSCG). Residues 55-116 (SYSGETGALV…LMGDFSAPAE (62 aa)) are Vesicular-facing. Residues 117–137 (FFVTLGIFSFFYTMAALVIYL) form a helical membrane-spanning segment. Residues 138-150 (RFHKLYTENKRFP) are Cytoplasmic-facing. Residues 151–171 (LVDFCVTVSFTFFWLVAAAAW) form a helical membrane-spanning segment. The Vesicular segment spans residues 172-213 (GKGLTDVKGATRPSSLTAAMSVCHGEEAVCSAGATPSMGLAN). The N-linked (GlcNAc...) asparagine glycan is linked to Asn213. A helical transmembrane segment spans residues 214-234 (LSVLFGFINFFLWAGNCWFVF). Residues 235–264 (KETPWHGQGQDQGQGPSQESAAEQGAVEKQ) lie on the Cytoplasmic side of the membrane. A disordered region spans residues 242 to 264 (QGQDQGQGPSQESAAEQGAVEKQ).

Belongs to the synaptophysin/synaptobrevin family. Expressed abundantly in skeletal muscle and at lower levels in the kidney.

It is found in the membrane. In terms of biological role, involved in communication between the T-tubular and junctional sarcoplasmic reticulum (SR) membranes. The sequence is that of Synaptophysin-like protein 2 (Sypl2) from Mus musculus (Mouse).